The sequence spans 245 residues: 1-(5-phosphoribosyl)-5-[(5-phosphoribosylamino)methylideneamino] imidazole-4-carboxamide isomerase (245 aa).

The active-site Proton acceptor is Asp7. Asp129 (proton donor) is an active-site residue.

The protein belongs to the HisA/HisF family.

The protein resides in the cytoplasm. It catalyses the reaction 1-(5-phospho-beta-D-ribosyl)-5-[(5-phospho-beta-D-ribosylamino)methylideneamino]imidazole-4-carboxamide = 5-[(5-phospho-1-deoxy-D-ribulos-1-ylimino)methylamino]-1-(5-phospho-beta-D-ribosyl)imidazole-4-carboxamide. Its pathway is amino-acid biosynthesis; L-histidine biosynthesis; L-histidine from 5-phospho-alpha-D-ribose 1-diphosphate: step 4/9. The chain is 1-(5-phosphoribosyl)-5-[(5-phosphoribosylamino)methylideneamino] imidazole-4-carboxamide isomerase from Proteus mirabilis (strain HI4320).